The primary structure comprises 390 residues: Putative 8-amino-7-oxononanoate synthase (390 aa).

Arginine 20 contributes to the substrate binding site. 107–108 (GY) contacts pyridoxal 5'-phosphate. Position 132 (histidine 132) interacts with substrate. Pyridoxal 5'-phosphate contacts are provided by residues serine 181, 206 to 209 (DDAH), and 237 to 240 (TLGK). Lysine 240 carries the post-translational modification N6-(pyridoxal phosphate)lysine. Residue threonine 356 participates in substrate binding.

The protein belongs to the class-II pyridoxal-phosphate-dependent aminotransferase family. BioF subfamily. In terms of assembly, homodimer. Pyridoxal 5'-phosphate is required as a cofactor.

The catalysed reaction is 6-carboxyhexanoyl-[ACP] + L-alanine + H(+) = (8S)-8-amino-7-oxononanoate + holo-[ACP] + CO2. Its pathway is cofactor biosynthesis; biotin biosynthesis. Functionally, catalyzes the decarboxylative condensation of pimeloyl-[acyl-carrier protein] and L-alanine to produce 8-amino-7-oxononanoate (AON), [acyl-carrier protein], and carbon dioxide. In Syntrophotalea carbinolica (strain DSM 2380 / NBRC 103641 / GraBd1) (Pelobacter carbinolicus), this protein is Putative 8-amino-7-oxononanoate synthase (bioF).